The primary structure comprises 1218 residues: Mgp-operon protein 3 (1218 aa).

An N-terminal signal peptide occupies residues 1-25; sequence MKSKLKLKRYLLFLPLLPLGTLSLA. Disordered regions lie at residues 109-129, 213-245, 262-353, and 411-440; these read QESQ…SGSN, HFGS…GFKL, EPLD…AVVS, and QDAT…PALT. Over residues 116 to 129 the composition is skewed to low complexity; it reads NGSQSGSSDTSGSN. Positions 217–231 are enriched in polar residues; that stretch reads GQESSWNSQRSQKGL. The segment covering 265 to 286 has biased composition (basic and acidic residues); the sequence is DSTKEGKGKDESSWKNSEKTTA. The segment covering 301-342 has biased composition (low complexity); that stretch reads AGSASSLQGNGSNSSGLKSLLRSAPVSVPPSSTSNQTLSLSN. Residues 411–428 show a composition bias toward polar residues; it reads QDATSTNLPHAAGASQTG. A helical membrane pass occupies residues 1121–1141; sequence VGSSVGILLILLILGLGIGIP. The span at 1192–1204 shows a compositional bias: low complexity; sequence NNAAPKAPVKPAA. Residues 1192 to 1218 are disordered; that stretch reads NNAAPKAPVKPAAPTAPRPPVQPPKKA. Positions 1205 to 1218 are enriched in pro residues; that stretch reads PTAPRPPVQPPKKA.

The protein localises to the cell membrane. The protein is Mgp-operon protein 3 of Mycoplasma pneumoniae (strain ATCC 29342 / M129 / Subtype 1) (Mycoplasmoides pneumoniae).